The following is a 123-amino-acid chain: Small ribosomal subunit protein bS16 (123 aa).

Residues 87-123 form a disordered region; it reads AKNNPIKAKPGKRAQERAAEKAQKAADAAAAAADAAE. A compositionally biased stretch (basic and acidic residues) spans 99–110; the sequence is RAQERAAEKAQK. Residues 111–123 show a composition bias toward low complexity; that stretch reads AADAAAAAADAAE.

It belongs to the bacterial ribosomal protein bS16 family.

The sequence is that of Small ribosomal subunit protein bS16 from Rhizobium etli (strain CIAT 652).